Here is a 113-residue protein sequence, read N- to C-terminus: Fruiting body-specific class I hydrophobin fbh1 (113 aa).

The N-terminal stretch at 1–20 (MFSIRIATVVLAASALLAAA) is a signal peptide. Disulfide bonds link C33-C92, C40-C86, C41-C73, and C93-C106.

This sequence belongs to the fungal hydrophobin family. As to quaternary structure, self-assembles to form functional amyloid fibrils called rodlets. Self-assembly into fibrillar rodlets occurs spontaneously at hydrophobic:hydrophilic interfaces and the rodlets further associate laterally to form amphipathic monolayers.

It localises to the secreted. It is found in the cell wall. In terms of biological role, aerial growth, conidiation, and dispersal of filamentous fungi in the environment rely upon a capability of their secreting small amphipathic proteins called hydrophobins (HPBs) with low sequence identity. Class I can self-assemble into an outermost layer of rodlet bundles on aerial cell surfaces, conferring cellular hydrophobicity that supports fungal growth, development and dispersal; whereas Class II form highly ordered films at water-air interfaces through intermolecular interactions but contribute nothing to the rodlet structure. Fbh1 is a fruiting body-specific class I hydrophobin that is involved in the growth rate and primordia formation. This Pleurotus ostreatus (strain PC15) (Oyster mushroom) protein is Fruiting body-specific class I hydrophobin fbh1.